A 208-amino-acid polypeptide reads, in one-letter code: Probable GTP-binding protein EngB (208 aa).

Residues Leu23–Thr205 enclose the EngB-type G domain. GTP contacts are provided by residues Gly31 to Ser38, Gly57 to Leu61, Asp84 to Gly87, Thr154 to Asp157, and Phe182 to Ala184. Mg(2+) is bound by residues Ser38 and Thr59.

This sequence belongs to the TRAFAC class TrmE-Era-EngA-EngB-Septin-like GTPase superfamily. EngB GTPase family. Mg(2+) serves as cofactor.

Its function is as follows. Necessary for normal cell division and for the maintenance of normal septation. This chain is Probable GTP-binding protein EngB, found in Helicobacter pylori (strain G27).